A 795-amino-acid polypeptide reads, in one-letter code: Lon protease 1 (795 aa).

Residues 9-204 (LPVLPLRNTV…RVLALLLRDL (196 aa)) form the Lon N-terminal domain. Residue 360 to 367 (GPPGVGKT) participates in ATP binding. The 182-residue stretch at 596–777 (EPQVGAAQGL…GEVLKLLLLP (182 aa)) folds into the Lon proteolytic domain. Residues S683 and K726 contribute to the active site.

It belongs to the peptidase S16 family. As to quaternary structure, homohexamer. Organized in a ring with a central cavity.

The protein localises to the cytoplasm. It carries out the reaction Hydrolysis of proteins in presence of ATP.. Its function is as follows. ATP-dependent serine protease that mediates the selective degradation of mutant and abnormal proteins as well as certain short-lived regulatory proteins. Required for cellular homeostasis and for survival from DNA damage and developmental changes induced by stress. Degrades polypeptides processively to yield small peptide fragments that are 5 to 10 amino acids long. Binds to DNA in a double-stranded, site-specific manner. This is Lon protease 1 from Thermus thermophilus (strain ATCC BAA-163 / DSM 7039 / HB27).